Consider the following 232-residue polypeptide: Succinyl-CoA:3-ketoacid coenzyme A transferase subunit A (232 aa).

24-30 contributes to the CoA binding site; sequence GGFGLCG.

The protein belongs to the 3-oxoacid CoA-transferase subunit A family. Heterodimer of a subunit A and a subunit B.

It carries out the reaction a 3-oxo acid + succinyl-CoA = a 3-oxoacyl-CoA + succinate. This is Succinyl-CoA:3-ketoacid coenzyme A transferase subunit A (scoA) from Helicobacter pylori (strain J99 / ATCC 700824) (Campylobacter pylori J99).